Reading from the N-terminus, the 95-residue chain is Beta-defensin 132 (95 aa).

Residues 1–22 (MKFLLLVLAALRFLTQVIPASA) form the signal peptide. 3 disulfide bridges follow: C27–C55, C35–C49, and C39–C56. A disordered region spans residues 72 to 95 (GNHWQSRRRNTQRKDKKQQTTVTS). A compositionally biased stretch (basic residues) spans 76-87 (QSRRRNTQRKDK).

The protein belongs to the beta-defensin family.

The protein resides in the secreted. In terms of biological role, has antibacterial activity. In Pongo pygmaeus (Bornean orangutan), this protein is Beta-defensin 132 (DEFB132).